The primary structure comprises 202 residues: Protein lin-28 homolog A (202 aa).

Disordered stretches follow at residues 1 to 33 (MPPA…GSFH) and 100 to 128 (SLQV…RSKG). Over residues 18 to 29 (EEEEAASSEEDS) the composition is skewed to acidic residues. The region spanning 33–106 (HGSGVCKWFN…GLESLQVTGP (74 aa)) is the CSD domain. The interval 107 to 130 (GGAPCVGSEKKPKGTQKRRSKGDR) is flexible linker. CCHC-type zinc fingers lie at residues 129–146 (DRCF…ECQL) and 151–168 (KKCH…NCPI). The Zn(2+) site is built by cysteine 131, cysteine 134, histidine 139, cysteine 144, cysteine 153, cysteine 156, histidine 161, and cysteine 166. The tract at residues 170–202 (AQQLSPGSQGKSTTSTGEEEDMSHTPLLPESTD) is disordered. Positions 171 to 185 (QQLSPGSQGKSTTST) are enriched in polar residues. Residue serine 174 is modified to Phosphoserine.

It belongs to the lin-28 family. As to quaternary structure, monomer.

It is found in the cytoplasm. It localises to the rough endoplasmic reticulum. Its subcellular location is the P-body. The protein resides in the stress granule. The protein localises to the nucleus. It is found in the nucleolus. RNA-binding protein that inhibits processing of pre-let-7 miRNAs and regulates translation of mRNAs that control developmental timing, pluripotency and metabolism. Seems to recognize a common structural G-quartet (G4) feature in its miRNA and mRNA targets. 'Translational enhancer' that drives specific mRNAs to polysomes and increases the efficiency of protein synthesis. Its association with the translational machinery and target mRNAs results in an increased number of initiation events per molecule of mRNA and, indirectly, in mRNA stabilization. Suppressor of microRNA (miRNA) biogenesis, including that of let-7. Binds specific target miRNA precursors (pre-miRNAs), recognizing an 5'-GGAG-3' motif found in their terminal loop, and recruits uridylyltransferase. This results in the terminal uridylation of target pre-miRNAs. Uridylated pre-miRNAs fail to be processed by Dicer and undergo degradation. Localized to the periendoplasmic reticulum area, binds to a large number of spliced mRNAs and inhibits the translation of mRNAs destined for the ER, reducing the synthesis of transmembrane proteins, ER or Golgi lumen proteins, and secretory proteins. Binds to and enhances the translation of mRNAs for several metabolic enzymes, increasing glycolysis and oxidative phosphorylation. Which, with the let-7 repression may enhance tissue repair in adult tissue. The chain is Protein lin-28 homolog A (lin28a) from Danio rerio (Zebrafish).